The primary structure comprises 306 residues: Bifunctional protein FolD (306 aa).

NADP(+) contacts are provided by residues Gly-166–Ser-168 and Ile-232.

Belongs to the tetrahydrofolate dehydrogenase/cyclohydrolase family. Homodimer.

It catalyses the reaction (6R)-5,10-methylene-5,6,7,8-tetrahydrofolate + NADP(+) = (6R)-5,10-methenyltetrahydrofolate + NADPH. The enzyme catalyses (6R)-5,10-methenyltetrahydrofolate + H2O = (6R)-10-formyltetrahydrofolate + H(+). It functions in the pathway one-carbon metabolism; tetrahydrofolate interconversion. Catalyzes the oxidation of 5,10-methylenetetrahydrofolate to 5,10-methenyltetrahydrofolate and then the hydrolysis of 5,10-methenyltetrahydrofolate to 10-formyltetrahydrofolate. This Methylorubrum extorquens (strain CM4 / NCIMB 13688) (Methylobacterium extorquens) protein is Bifunctional protein FolD.